We begin with the raw amino-acid sequence, 236 residues long: Small ribosomal subunit protein uS2c (236 aa).

The protein belongs to the universal ribosomal protein uS2 family.

The protein localises to the plastid. Its subcellular location is the chloroplast. In Amborella trichopoda, this protein is Small ribosomal subunit protein uS2c (rps2).